The following is a 200-amino-acid chain: ATP synthase subunit s, mitochondrial (200 aa).

Residues 1–25 (MMLFGKISQQLCGLKKLPWSRDSRY) constitute a mitochondrion transit peptide. Residues 1-61 (MMLFGKISQQ…SEWLLRCGAM (61 aa)) form an N-terminal domain region. Gly59 lines the Mg(2+) pocket. LRR repeat units lie at residues 62–87 (VRYH…KYKI), 88–116 (QAID…KIRL), 117–141 (CKCH…KSML), and 142–173 (EMEI…LSDL). Thr93 is a binding site for Mg(2+).

This sequence belongs to the ATP synthase subunit s family. In terms of assembly, homotetramer. Associates with ATP synthase.

It localises to the mitochondrion. It is found in the mitochondrion inner membrane. In terms of biological role, involved in regulation of mitochondrial membrane ATP synthase. Necessary for H(+) conduction of ATP synthase. Facilitates energy-driven catalysis of ATP synthesis by blocking a proton leak through an alternative proton exit pathway. The protein is ATP synthase subunit s, mitochondrial (DMAC2L) of Bos taurus (Bovine).